The primary structure comprises 107 residues: Flagellar transcriptional regulator FlhD (107 aa).

The protein belongs to the FlhD family. As to quaternary structure, homodimer; disulfide-linked. Forms a heterohexamer composed of two FlhC and four FlhD subunits. Each FlhC binds a FlhD dimer, forming a heterotrimer, and a hexamer assembles by dimerization of two heterotrimers.

Its subcellular location is the cytoplasm. Functions in complex with FlhC as a master transcriptional regulator that regulates transcription of several flagellar and non-flagellar operons by binding to their promoter region. Activates expression of class 2 flagellar genes, including fliA, which is a flagellum-specific sigma factor that turns on the class 3 genes. Also regulates genes whose products function in a variety of physiological pathways. In Bordetella pertussis (strain Tohama I / ATCC BAA-589 / NCTC 13251), this protein is Flagellar transcriptional regulator FlhD.